The chain runs to 29 residues: Cyclotide mobo-A (29 aa).

The cyclopeptide (Gly-Asn) cross-link spans 1-29 (GFPTCGETCTLGTCNTPGCTCSWPICTRN). Disulfide bonds link C5/C19, C9/C21, and C14/C26.

The protein belongs to the cyclotide family. Moebius subfamily. In terms of processing, this is a cyclic peptide.

Its function is as follows. Probably participates in a plant defense mechanism. In Melicytus obovatus (Hymenanthera obovata), this protein is Cyclotide mobo-A.